The following is a 471-amino-acid chain: Proline--tRNA ligase 2 (471 aa).

Belongs to the class-II aminoacyl-tRNA synthetase family. ProS type 3 subfamily. In terms of assembly, homodimer.

Its subcellular location is the cytoplasm. The enzyme catalyses tRNA(Pro) + L-proline + ATP = L-prolyl-tRNA(Pro) + AMP + diphosphate. Its function is as follows. Catalyzes the attachment of proline to tRNA(Pro) in a two-step reaction: proline is first activated by ATP to form Pro-AMP and then transferred to the acceptor end of tRNA(Pro). The chain is Proline--tRNA ligase 2 from Streptomyces avermitilis (strain ATCC 31267 / DSM 46492 / JCM 5070 / NBRC 14893 / NCIMB 12804 / NRRL 8165 / MA-4680).